Reading from the N-terminus, the 66-residue chain is Ocellatin-PT4 (66 aa).

The signal sequence occupies residues M1 to C22. A propeptide spanning residues D23–E39 is cleaved from the precursor. V66 carries the valine amide modification.

As to expression, expressed by the skin glands.

It is found in the secreted. In terms of biological role, has antibacterial activity against Gram-negative bacteria E.coli ATCC 25922 (MIC=80 uM), K.pneumoniae ATCC 700603 (MIC=310 uM) and S.choleraesuis ATCC 14028 (MIC=310 uM). Shows no hemolytic activity and no cytotoxicity. The chain is Ocellatin-PT4 from Leptodactylus pustulatus (Ceara white-lipped frog).